The sequence spans 343 residues: 4-hydroxy-2-oxovalerate aldolase (343 aa).

Residues 5–256 (ILLCDPTLRD…ETGIDLYKIL (252 aa)) enclose the Pyruvate carboxyltransferase domain. 13–14 (RD) is a binding site for substrate. A Mn(2+)-binding site is contributed by aspartate 14. Histidine 17 acts as the Proton acceptor in catalysis. 2 residues coordinate substrate: serine 168 and histidine 195. Histidine 195 and histidine 197 together coordinate Mn(2+).

Belongs to the 4-hydroxy-2-oxovalerate aldolase family. As to quaternary structure, interacts with MhpF.

It catalyses the reaction (S)-4-hydroxy-2-oxopentanoate = acetaldehyde + pyruvate. It participates in aromatic compound metabolism; 3-phenylpropanoate degradation. In terms of biological role, catalyzes the retro-aldol cleavage of 4-hydroxy-2-oxopentanoate to pyruvate and acetaldehyde. Is involved in the meta-cleavage pathway for the degradation of aromatic compounds. This is 4-hydroxy-2-oxovalerate aldolase from Pectobacterium atrosepticum (strain SCRI 1043 / ATCC BAA-672) (Erwinia carotovora subsp. atroseptica).